A 110-amino-acid chain; its full sequence is Iron-sulfur cluster assembly protein CyaY (110 aa).

This sequence belongs to the frataxin family.

Involved in iron-sulfur (Fe-S) cluster assembly. May act as a regulator of Fe-S biogenesis. This Pseudomonas syringae pv. syringae (strain B728a) protein is Iron-sulfur cluster assembly protein CyaY.